We begin with the raw amino-acid sequence, 402 residues long: Tryptophan synthase beta chain (402 aa).

An N6-(pyridoxal phosphate)lysine modification is found at lysine 91.

This sequence belongs to the TrpB family. In terms of assembly, tetramer of two alpha and two beta chains. It depends on pyridoxal 5'-phosphate as a cofactor.

It catalyses the reaction (1S,2R)-1-C-(indol-3-yl)glycerol 3-phosphate + L-serine = D-glyceraldehyde 3-phosphate + L-tryptophan + H2O. It participates in amino-acid biosynthesis; L-tryptophan biosynthesis; L-tryptophan from chorismate: step 5/5. Its function is as follows. The beta subunit is responsible for the synthesis of L-tryptophan from indole and L-serine. The polypeptide is Tryptophan synthase beta chain (Streptococcus thermophilus (strain ATCC BAA-491 / LMD-9)).